A 355-amino-acid polypeptide reads, in one-letter code: UDP-3-O-acylglucosamine N-acyltransferase (355 aa).

The active-site Proton acceptor is the His-246.

This sequence belongs to the transferase hexapeptide repeat family. LpxD subfamily. In terms of assembly, homotrimer.

The enzyme catalyses a UDP-3-O-[(3R)-3-hydroxyacyl]-alpha-D-glucosamine + a (3R)-hydroxyacyl-[ACP] = a UDP-2-N,3-O-bis[(3R)-3-hydroxyacyl]-alpha-D-glucosamine + holo-[ACP] + H(+). It functions in the pathway bacterial outer membrane biogenesis; LPS lipid A biosynthesis. Functionally, catalyzes the N-acylation of UDP-3-O-acylglucosamine using 3-hydroxyacyl-ACP as the acyl donor. Is involved in the biosynthesis of lipid A, a phosphorylated glycolipid that anchors the lipopolysaccharide to the outer membrane of the cell. This is UDP-3-O-acylglucosamine N-acyltransferase from Polaromonas naphthalenivorans (strain CJ2).